The chain runs to 147 residues: Protein-export protein SecB (147 aa).

The protein belongs to the SecB family. In terms of assembly, homotetramer, a dimer of dimers. One homotetramer interacts with 1 SecA dimer.

The protein localises to the cytoplasm. Functionally, one of the proteins required for the normal export of preproteins out of the cell cytoplasm. It is a molecular chaperone that binds to a subset of precursor proteins, maintaining them in a translocation-competent state. It also specifically binds to its receptor SecA. This Neisseria meningitidis serogroup A / serotype 4A (strain DSM 15465 / Z2491) protein is Protein-export protein SecB.